Consider the following 1109-residue polypeptide: ABC transporter G family member 28 (1109 aa).

A run of 2 helical transmembrane segments spans residues 5 to 25 (NSYF…LILQ) and 291 to 311 (NITA…IILY). Residues 325-411 (QAKSREKAVQ…DTKKGKKKEK (87 aa)) form a disordered region. The segment covering 339–357 (SQSREKWKSAKDIAKKHAT) has biased composition (basic and acidic residues). Residues 499–741 (VAFKDLSITL…FSSLGIVVPE (243 aa)) enclose the ABC transporter domain. Position 533–540 (533–540 (GPSGAGKT)) interacts with ATP. The 198-residue stretch at 859–1056 (QQYRYFLGRL…ALEAFVVSNA (198 aa)) folds into the ABC transmembrane type-2 domain. The next 6 helical transmembrane spans lie at 879–899 (LAVD…LAKV), 904–924 (FGAM…KITA), 954–974 (TVDH…FYFF), 986–1006 (VVLI…AILF), 1008–1028 (PGPA…IATS), and 1084–1104 (CLVF…FCMV).

It belongs to the ABC transporter superfamily. ABCG family. Eye pigment precursor importer (TC 3.A.1.204) subfamily.

Its subcellular location is the membrane. The protein is ABC transporter G family member 28 (ABCG28) of Arabidopsis thaliana (Mouse-ear cress).